A 984-amino-acid polypeptide reads, in one-letter code: Mineralocorticoid receptor (984 aa).

Residues 1 to 602 (METKGYHSLP…STGSSRPSKI (602 aa)) are modulating. A compositionally biased stretch (polar residues) spans 231-243 (QGTPLTCSPNVEN). Disordered stretches follow at residues 231 to 329 (QGTP…AAST) and 346 to 369 (SGTS…EKGA). S250, S259, S283, S287, and S299 each carry phosphoserine. The segment covering 259-291 (SPLSSPLSSMKSSISSPPSHCSVKSPVSSPNNV) has biased composition (low complexity). A compositionally biased stretch (polar residues) spans 292 to 329 (TLRSSVSSPANINNSRCSVSSPSNTNNRSTLSSPAAST). Residues 346 to 355 (SGTSAGSSTS) are compositionally biased toward low complexity. The Zn(2+) site is built by C603, C606, C620, C623, C639, C645, C655, and C658. 2 NR C4-type zinc fingers span residues 603–623 (CLVC…CGSC) and 639–663 (CAGR…LQKC). A DNA-binding region (nuclear receptor) is located at residues 603–668 (CLVCGDEASG…RLQKCLQAGM (66 aa)). Positions 669–725 (NLGARKSKKLGKLKGIHEEQPQQQQPPPPPPPPQSPEEGTTYIAPAKEPSVNTALVP) are hinge. Positions 684-710 (IHEEQPQQQQPPPPPPPPQSPEEGTTY) are disordered. A compositionally biased stretch (pro residues) spans 692-703 (QQPPPPPPPPQS). The 239-residue stretch at 726–964 (QLSTISRALT…EFPAMLVEII (239 aa)) folds into the NR LBD domain. 21-hydroxyprogesterone is bound by residues N770 and Q776. Residues N770 and Q776 each coordinate aldosterone. 2 residues coordinate progesterone: N770 and Q776. The interval 782–785 (KWAK) is important for coactivator binding. R817 and T945 together coordinate 21-hydroxyprogesterone. R817 and T945 together coordinate aldosterone. Progesterone contacts are provided by R817 and T945.

The protein belongs to the nuclear hormone receptor family. NR3 subfamily. In terms of assembly, heteromultimeric cytoplasmic complex with HSP90, HSP70, and FKBP4, in the absence of ligand. After ligand binding, it translocates to the nucleus and binds to DNA as a homodimer and as a heterodimer with NR3C1. Binds the coactivator NCOA2. May interact with HSD11B2 in the absence of ligand. Binds the coactivators NCOA1, TIF1 and NRIP1. In terms of processing, phosphorylated.

The protein resides in the cytoplasm. It is found in the nucleus. It localises to the endoplasmic reticulum membrane. In terms of biological role, receptor for both mineralocorticoids (MC) such as aldosterone and glucocorticoids (GC) such as corticosterone or cortisol. Binds to mineralocorticoid response elements (MRE) and transactivates target genes. The effect of MC is to increase ion and water transport and thus raise extracellular fluid volume and blood pressure and lower potassium levels. This is Mineralocorticoid receptor (NR3C2) from Aotus nancymaae (Ma's night monkey).